A 204-amino-acid chain; its full sequence is Glycerol-3-phosphate acyltransferase (204 aa).

5 helical membrane-spanning segments follow: residues isoleucine 8 to phenylalanine 28, valine 53 to alanine 73, phenylalanine 81 to glycine 101, phenylalanine 116 to isoleucine 136, and valine 155 to leucine 175.

It belongs to the PlsY family. As to quaternary structure, probably interacts with PlsX.

Its subcellular location is the cell inner membrane. It catalyses the reaction an acyl phosphate + sn-glycerol 3-phosphate = a 1-acyl-sn-glycero-3-phosphate + phosphate. It participates in lipid metabolism; phospholipid metabolism. Its function is as follows. Catalyzes the transfer of an acyl group from acyl-phosphate (acyl-PO(4)) to glycerol-3-phosphate (G3P) to form lysophosphatidic acid (LPA). This enzyme utilizes acyl-phosphate as fatty acyl donor, but not acyl-CoA or acyl-ACP. The polypeptide is Glycerol-3-phosphate acyltransferase (Francisella tularensis subsp. holarctica (strain OSU18)).